The chain runs to 238 residues: Sugar fermentation stimulation protein homolog (238 aa).

Belongs to the SfsA family.

This chain is Sugar fermentation stimulation protein homolog, found in Haemophilus influenzae (strain ATCC 51907 / DSM 11121 / KW20 / Rd).